A 243-amino-acid chain; its full sequence is Orotidine 5'-phosphate decarboxylase (243 aa).

Residues Asp-19, Lys-41, Asp-69 to Thr-78, Thr-124, Arg-185, Gln-194, Gly-214, and Arg-215 contribute to the substrate site. Residue Lys-71 is the Proton donor of the active site.

The protein belongs to the OMP decarboxylase family. Type 1 subfamily. As to quaternary structure, homodimer.

It catalyses the reaction orotidine 5'-phosphate + H(+) = UMP + CO2. Its pathway is pyrimidine metabolism; UMP biosynthesis via de novo pathway; UMP from orotate: step 2/2. Functionally, catalyzes the decarboxylation of orotidine 5'-monophosphate (OMP) to uridine 5'-monophosphate (UMP). The chain is Orotidine 5'-phosphate decarboxylase from Xanthomonas euvesicatoria pv. vesicatoria (strain 85-10) (Xanthomonas campestris pv. vesicatoria).